Consider the following 132-residue polypeptide: Nickel-responsive regulator (132 aa).

The Ni(2+) site is built by histidine 76, histidine 87, histidine 89, and cysteine 95.

This sequence belongs to the transcriptional regulatory CopG/NikR family. In terms of assembly, homotetramer. Requires Ni(2+) as cofactor.

Functionally, transcriptional repressor of the nikABCDE operon. Is active in the presence of excessive concentrations of intracellular nickel. The polypeptide is Nickel-responsive regulator (Klebsiella pneumoniae (strain 342)).